The sequence spans 1562 residues: E3 ubiquitin-protein ligase listerin (1562 aa).

14 HEAT repeats span residues 41 to 78 (SLYSNELKLIFKSLLKRDETTKEKALMDLSNLISDFNQ), 127 to 164 (KFLKDFIPLILLGTCELDYSVSKPSLNELTECFNKDPA), 175 to 217 (EQLL…SAVL), 262 to 301 (ETVLRLIDVLYTRGYMPSHKNIMKLAVKKLLKSLTHITSK), 304 to 348 (LKVC…VSRT), 495 to 532 (SAISRLFDFFVQLIETDPSNVFNKYDGVYDALNYFLDS), 555 to 592 (STYQNFAGIMAQYSNSKFFKMNTDAITSLEDFFIVALS), 813 to 850 (IRYALFLDALLDALPERVNNHIVAFITVVSELVTDYNC), 908 to 945 (YYSRVLYKVLLNSIDTVSSTTLNGLLASVESFVTKTVR), 997 to 1037 (FKSL…WLDS), 1047 to 1085 (TVRLLLLDFFTKLMRFEGVRDMGITAFELSERLLADSLS), 1188 to 1226 (INQSRLLTTLLGSLVVKTQQDIIIEYELRIQKQTGSDVD), 1263 to 1298 (NSFIKYLWYWHLILMYFKDTSYNMRQIFIEQLKEAG), and 1299 to 1339 (LINR…NFSP). The segment at 1508 to 1555 (CAICYSILHAVDRKLPSKTCPTCKNKFHGACLYKWFRSSGNNTCPLCR) adopts an RING-type zinc-finger fold.

The protein belongs to the LTN1 family. As to quaternary structure, component of the ribosome quality control complex (RQC), composed of the E3 ubiquitin ligase RKR1/LTN1, RQC1 and RQC2, as well as CDC48 and its ubiquitin-binding cofactors associated with the 60S ribosomal subunits.

The protein localises to the nucleus. The protein resides in the cytoplasm. It localises to the cytosol. The enzyme catalyses S-ubiquitinyl-[E2 ubiquitin-conjugating enzyme]-L-cysteine + [acceptor protein]-L-lysine = [E2 ubiquitin-conjugating enzyme]-L-cysteine + N(6)-ubiquitinyl-[acceptor protein]-L-lysine.. It participates in protein modification; protein ubiquitination. Functionally, E3 ubiquitin-protein ligase component of the ribosome quality control complex (RQC), a ribosome-associated complex that mediates ubiquitination and extraction of incompletely synthesized nascent chains for proteasomal degradation. Mediates ubiquitination of proteins derived from mRNAs lacking stop codons (non-stop proteins) and other translation arrest products induced by poly-lysine sequences and tandem rare codons. Ubiquitination leads to CDC48 recruitment for extraction and degradation of the incomplete translation product. May indirectly play a role in chromatin function and transcription. The polypeptide is E3 ubiquitin-protein ligase listerin (Saccharomyces cerevisiae (strain ATCC 204508 / S288c) (Baker's yeast)).